The following is a 327-amino-acid chain: Trypsin-like protease try-5 (327 aa).

An N-terminal signal peptide occupies residues 1–21 (MRPRIIVFLFQVLVVIKGTKL). The Peptidase S1 domain maps to 43 to 327 (AAGNTGNPTH…KFIVNFINQA (285 aa)). C73 and C89 are disulfide-bonded. Residues H88 and D173 each act as charge relay system in the active site. Residue N207 is glycosylated (N-linked (GlcNAc...) asparagine). Disulfide bonds link C242–C256 and C266–C296. S270 acts as the Charge relay system in catalysis.

It belongs to the peptidase S1 family. Specifically expressed in the male gonad including the seminal vesicle, the valve region and the vas deferens.

It localises to the secreted. It is found in the cytoplasmic vesicle. The protein localises to the secretory vesicle lumen. In the male gonad, probably maintained inactive by swm-1. Functionally, serine protease which, in males, acts as a promoting signal during mating to activate sperm. The polypeptide is Trypsin-like protease try-5 (Caenorhabditis elegans).